We begin with the raw amino-acid sequence, 66 residues long: Large ribosomal subunit protein bL31 (66 aa).

Cysteine 16, cysteine 18, cysteine 36, and cysteine 39 together coordinate Zn(2+).

The protein belongs to the bacterial ribosomal protein bL31 family. Type A subfamily. In terms of assembly, part of the 50S ribosomal subunit. Zn(2+) is required as a cofactor.

Binds the 23S rRNA. The sequence is that of Large ribosomal subunit protein bL31 from Desulforamulus reducens (strain ATCC BAA-1160 / DSM 100696 / MI-1) (Desulfotomaculum reducens).